The primary structure comprises 111 residues: Phosphoribosyl-AMP cyclohydrolase (111 aa).

Position 80 (Asp80) interacts with Mg(2+). Zn(2+) is bound at residue Cys81. Asp82 and Asp84 together coordinate Mg(2+). Zn(2+) is bound by residues Cys97 and Cys104.

Belongs to the PRA-CH family. Homodimer. Mg(2+) serves as cofactor. Zn(2+) is required as a cofactor.

It localises to the cytoplasm. The catalysed reaction is 1-(5-phospho-beta-D-ribosyl)-5'-AMP + H2O = 1-(5-phospho-beta-D-ribosyl)-5-[(5-phospho-beta-D-ribosylamino)methylideneamino]imidazole-4-carboxamide. It participates in amino-acid biosynthesis; L-histidine biosynthesis; L-histidine from 5-phospho-alpha-D-ribose 1-diphosphate: step 3/9. In terms of biological role, catalyzes the hydrolysis of the adenine ring of phosphoribosyl-AMP. In Mycobacterium ulcerans (strain Agy99), this protein is Phosphoribosyl-AMP cyclohydrolase.